A 262-amino-acid chain; its full sequence is Flap endonuclease Xni (262 aa).

Aspartate 105 is a binding site for Mg(2+). The 5'-3' exonuclease domain occupies glutamate 162–isoleucine 259. 5 residues coordinate K(+): leucine 172, alanine 173, proline 181, isoleucine 183, and isoleucine 186. The tract at residues glycine 185–serine 190 is interaction with DNA.

The protein belongs to the Xni family. The cofactor is Mg(2+). K(+) is required as a cofactor.

Functionally, has flap endonuclease activity. During DNA replication, flap endonucleases cleave the 5'-overhanging flap structure that is generated by displacement synthesis when DNA polymerase encounters the 5'-end of a downstream Okazaki fragment. The sequence is that of Flap endonuclease Xni from Shewanella baltica (strain OS185).